The primary structure comprises 782 residues: MAEPPRLPLTFEDVAIYFSEQEWQDLEAWQKELYKHVMRSNYETLVSLDDGLPKPELISWIEHGGEPFRKWRESQKSGNIICSSVDMHFDPGFEEQLFWGSQQAMNSGKTKSHFQLDPESQCSFGSFVSFRPDQGITLGSPQRHDARAPPPLACGPSESTLKEGIPGPRNLDLPGLWDVPAWESTQHPWPVCGESCWENNHLVMHQRGHSKDRTRRAWEKFNKRAETQMPWSSPRVQRHFRCGVCGKSFRRKLCLLRHLAAHTGRGPFRNADGEMCFRHELTHPSHRLPQQGEKPAQCTPCGKRSLPVDSTQARRCQHSREGPASWREGRGASSSVHSGQKPGSRLPQEGNSHQEGDTEALQHGAEGPCSCSECGERSPMSARLASPCRAHTGEKPFQCAHCTKRFRLRRLLQVHQHAHGGERPFSCRKCGKGFAKQCKLTEHIRVHSGEKPFRCAKCGRNFRQRGQLLRHQRLHTDEKPFQCPECGLSFRLESMLRAHRLRHGGERPFSCSECGRGFTHQCKLREHLRVHSGERPFQCLKCDKRFRLKGILKAHQHTHSKERPFSCGECGKGFTRQSKLTEHLRVHSGERPFQCPECNRSFRLKGQLLSHQRLHTGERPFQCPECDKRYRVKADMKAHQLLHSGEMPFSCECGKGFVKHSKLIEHIRTHTGEKPFQCPKCDKSFRLKAQLLSHQGLHTGERPFHCPECDKNFRERGHMLRHQRIHRPERPFACGDCGKGFIYKSKLAEHIRVHTKSCPAPNELDIKKRLSQLFAMIEADWS.

Residues 9-80 (LTFEDVAIYF…WRESQKSGNI (72 aa)) form the KRAB domain. Positions 141 to 164 (PQRHDARAPPPLACGPSESTLKEG) are disordered. The segment at 192 to 209 (CGESCWENNHLVMHQRGH) adopts a C2H2-type 1; degenerate zinc-finger fold. The C2H2-type 2 zinc-finger motif lies at 240–262 (FRCGVCGKSFRRKLCLLRHLAAH). A disordered region spans residues 285-364 (SHRLPQQGEK…EGDTEALQHG (80 aa)). The C2H2-type 3; degenerate zinc-finger motif lies at 369–391 (CSCSECGERSPMSARLASPCRAH). C2H2-type zinc fingers lie at residues 397-419 (FQCA…QHAH), 425-447 (FSCR…IRVH), and 453-475 (FRCA…QRLH). The C2H2-type 7; degenerate zinc-finger motif lies at 481–503 (FQCPECGLSFRLESMLRAHRLRH). 9 C2H2-type zinc fingers span residues 509–531 (FSCS…LRVH), 537–559 (FQCL…QHTH), 565–587 (FSCG…LRVH), 593–615 (FQCP…QRLH), 621–643 (FQCP…QLLH), 649–670 (FSCE…IRTH), 676–698 (FQCP…QGLH), 704–726 (FHCP…QRIH), and 732–754 (FACG…IRVH).

This sequence belongs to the krueppel C2H2-type zinc-finger protein family.

Its subcellular location is the nucleus. Its function is as follows. May be involved in transcriptional regulation. In Homo sapiens (Human), this protein is Zinc finger protein 786 (ZNF786).